The chain runs to 206 residues: Flavin reductase (NADPH) (206 aa).

Residues glycine 10, threonine 12, glycine 13, glutamine 14, threonine 15, arginine 35, serine 38, and arginine 39 each coordinate NADP(+). Serine 42 bears the Phosphoserine mark. Residues aspartate 54, valine 55, leucine 75, glycine 76, and arginine 78 each contribute to the NADP(+) site. Serine 82 is modified (phosphoserine). Positions 87, 109, 132, 153, and 154 each coordinate NADP(+). The S-nitroso-cysteine intermediate; for S-nitroso-CoA-dependent nitrosyltransferase activity role is filled by cysteine 109. Catalysis depends on cysteine 188, which acts as the S-nitroso-cysteine intermediate; for S-nitroso-CoA-dependent nitrosyltransferase activity.

This sequence belongs to the BLVRB family. As to quaternary structure, monomer. In terms of tissue distribution, predominantly expressed in liver and erythrocytes. At lower levels in heart, lung, adrenal gland and cerebrum. Expressed in adult red blood cells.

The protein localises to the cytoplasm. It carries out the reaction reduced riboflavin + NADP(+) = riboflavin + NADPH + 2 H(+). It catalyses the reaction bilirubin IXbeta + NADP(+) = biliverdin IXbeta + NADPH + H(+). The catalysed reaction is FMNH2 + NAD(+) = FMN + NADH + 2 H(+). The enzyme catalyses FMNH2 + NADP(+) = FMN + NADPH + 2 H(+). It carries out the reaction S-nitroso-CoA + L-cysteinyl-[protein] = S-nitroso-L-cysteinyl-[protein] + CoA. It catalyses the reaction L-cysteinyl-[SCAN] + S-nitroso-CoA = S-nitroso-L-cysteinyl-[SCAN] + CoA. The catalysed reaction is S-nitroso-L-cysteinyl-[SCAN] + L-cysteinyl-[protein] = L-cysteinyl-[SCAN] + S-nitroso-L-cysteinyl-[protein]. Mesobiliverdin acts as a competitive inhibitor for flavin reduction, indicating that flavin and tetrapyrrole substrates compete for the same site. Inhibited by a wide range of xanthene-based drugs, such as phloxine B, erythrosin B, tamibarotene, sulfasalazine, olsalazine, febuxostat, ataluren (PTC124) and deferasirox. Its function is as follows. Enzyme that can both act as a NAD(P)H-dependent reductase and a S-nitroso-CoA-dependent nitrosyltransferase. Promotes fetal heme degradation during development. Also expressed in adult tissues, where it acts as a regulator of hematopoiesis, intermediary metabolism (glutaminolysis, glycolysis, TCA cycle and pentose phosphate pathway) and insulin signaling. Has a broad specificity oxidoreductase activity by catalyzing the NAD(P)H-dependent reduction of a variety of flavins, such as riboflavin, FAD or FMN, biliverdins, methemoglobin and PQQ (pyrroloquinoline quinone). Contributes to fetal heme catabolism by catalyzing reduction of biliverdin IXbeta into bilirubin IXbeta in the liver. Biliverdin IXbeta, which constitutes the major heme catabolite in the fetus is not present in adult. Does not reduce bilirubin IXalpha. Can also reduce the complexed Fe(3+) iron to Fe(2+) in the presence of FMN and NADPH. Acts as a protein nitrosyltransferase by catalyzing nitrosylation of cysteine residues of target proteins, such as HMOX2, INSR and IRS1. S-nitroso-CoA-dependent nitrosyltransferase activity is mediated via a 'ping-pong' mechanism: BLVRB first associates with both S-nitroso-CoA and protein substrate, nitric oxide group is then transferred from S-nitroso-CoA to Cys-109 and Cys-188 residues of BLVRB and from S-nitroso-BLVRB to the protein substrate. Inhibits insulin signaling by mediating nitrosylation of INSR and IRS1, leading to their inhibition. This chain is Flavin reductase (NADPH), found in Homo sapiens (Human).